The chain runs to 154 residues: Putative NADPH-dependent 7-cyano-7-deazaguanine reductase (154 aa).

Catalysis depends on aspartate 52, which acts as the Proton donor. Residues 67–69 (VES) and 86–87 (HE) contribute to the substrate site.

Belongs to the GTP cyclohydrolase I family. QueF type 1 subfamily.

The protein localises to the cytoplasm. It carries out the reaction 7-aminomethyl-7-carbaguanine + 2 NADP(+) = 7-cyano-7-deazaguanine + 2 NADPH + 3 H(+). Its pathway is tRNA modification; tRNA-queuosine biosynthesis. Its function is as follows. Catalyzes the NADPH-dependent reduction of 7-cyano-7-deazaguanine (preQ0) to 7-aminomethyl-7-deazaguanine (preQ1). This Streptococcus pneumoniae (strain ATCC BAA-255 / R6) protein is Putative NADPH-dependent 7-cyano-7-deazaguanine reductase.